We begin with the raw amino-acid sequence, 811 residues long: Ribonucleoside-diphosphate reductase large chain (811 aa).

The ATP-cone domain occupies 1–92 (MFVYKRDGRQ…VSNLHKQTEK (92 aa)). ATP-binding positions include 5–6 (KR), 11–17 (EKVAFDK), Thr53, and Asp57. Residues Ser202 and Ser217 each coordinate GDP. The cysteines at positions 218 and 444 are disulfide-linked. DTTP is bound by residues 226-228 (DSI), Lys243, Arg256, and 263-264 (AG). Asn427 provides a ligand contact to GDP. Residue Asn427 is the Proton acceptor of the active site. Residue Cys429 is the Cysteine radical intermediate of the active site. Residues Glu431 and 603-606 (TAST) each bind GDP. Glu431 acts as the Proton acceptor in catalysis.

This sequence belongs to the ribonucleoside diphosphate reductase large chain family. As to quaternary structure, heterodimer of a large and a small subunit. Interacts with SPD1.

It carries out the reaction a 2'-deoxyribonucleoside 5'-diphosphate + [thioredoxin]-disulfide + H2O = a ribonucleoside 5'-diphosphate + [thioredoxin]-dithiol. Under complex allosteric control mediated by deoxynucleoside triphosphates and ATP binding to separate specificity and activation sites on the large subunit. The type of nucleotide bound at the specificity site determines substrate preference. It seems probable that ATP makes the enzyme reduce CDP and UDP, dGTP favors ADP reduction and dTTP favors GDP reduction. Stimulated by ATP and inhibited by dATP binding to the activity site. Its function is as follows. Provides the precursors necessary for DNA synthesis. Catalyzes the biosynthesis of deoxyribonucleotides from the corresponding ribonucleotides. The sequence is that of Ribonucleoside-diphosphate reductase large chain (cdc22) from Schizosaccharomyces pombe (strain 972 / ATCC 24843) (Fission yeast).